Reading from the N-terminus, the 240-residue chain is Pyridoxine 5'-phosphate synthase (240 aa).

Asn-6 contacts 3-amino-2-oxopropyl phosphate. A 1-deoxy-D-xylulose 5-phosphate-binding site is contributed by 8–9; that stretch reads DH. Residue Arg-17 participates in 3-amino-2-oxopropyl phosphate binding. The Proton acceptor role is filled by His-42. 1-deoxy-D-xylulose 5-phosphate is bound by residues Arg-44 and His-49. Glu-69 acts as the Proton acceptor in catalysis. Thr-99 contributes to the 1-deoxy-D-xylulose 5-phosphate binding site. The Proton donor role is filled by His-193. 3-amino-2-oxopropyl phosphate-binding positions include Gly-194 and 216–217; that span reads GH.

It belongs to the PNP synthase family. As to quaternary structure, homooctamer; tetramer of dimers.

The protein resides in the cytoplasm. The enzyme catalyses 3-amino-2-oxopropyl phosphate + 1-deoxy-D-xylulose 5-phosphate = pyridoxine 5'-phosphate + phosphate + 2 H2O + H(+). The protein operates within cofactor biosynthesis; pyridoxine 5'-phosphate biosynthesis; pyridoxine 5'-phosphate from D-erythrose 4-phosphate: step 5/5. In terms of biological role, catalyzes the complicated ring closure reaction between the two acyclic compounds 1-deoxy-D-xylulose-5-phosphate (DXP) and 3-amino-2-oxopropyl phosphate (1-amino-acetone-3-phosphate or AAP) to form pyridoxine 5'-phosphate (PNP) and inorganic phosphate. This Hydrogenobaculum sp. (strain Y04AAS1) protein is Pyridoxine 5'-phosphate synthase.